The sequence spans 279 residues: Urease accessory protein UreD (279 aa).

This sequence belongs to the UreD family. In terms of assembly, ureD, UreF and UreG form a complex that acts as a GTP-hydrolysis-dependent molecular chaperone, activating the urease apoprotein by helping to assemble the nickel containing metallocenter of UreC. The UreE protein probably delivers the nickel.

It localises to the cytoplasm. Functionally, required for maturation of urease via the functional incorporation of the urease nickel metallocenter. This chain is Urease accessory protein UreD, found in Streptococcus thermophilus (strain CNRZ 1066).